The sequence spans 353 residues: UDP-N-acetylglucosamine--N-acetylmuramyl-(pentapeptide) pyrophosphoryl-undecaprenol N-acetylglucosamine transferase (353 aa).

UDP-N-acetyl-alpha-D-glucosamine is bound by residues asparagine 123, arginine 161, serine 189, isoleucine 243, 262-267 (ALTVSE), and glutamine 287.

Belongs to the glycosyltransferase 28 family. MurG subfamily.

The protein resides in the cell membrane. It carries out the reaction di-trans,octa-cis-undecaprenyl diphospho-N-acetyl-alpha-D-muramoyl-L-alanyl-D-glutamyl-meso-2,6-diaminopimeloyl-D-alanyl-D-alanine + UDP-N-acetyl-alpha-D-glucosamine = di-trans,octa-cis-undecaprenyl diphospho-[N-acetyl-alpha-D-glucosaminyl-(1-&gt;4)]-N-acetyl-alpha-D-muramoyl-L-alanyl-D-glutamyl-meso-2,6-diaminopimeloyl-D-alanyl-D-alanine + UDP + H(+). Its pathway is cell wall biogenesis; peptidoglycan biosynthesis. In terms of biological role, cell wall formation. Catalyzes the transfer of a GlcNAc subunit on undecaprenyl-pyrophosphoryl-MurNAc-pentapeptide (lipid intermediate I) to form undecaprenyl-pyrophosphoryl-MurNAc-(pentapeptide)GlcNAc (lipid intermediate II). This Buchnera aphidicola subsp. Baizongia pistaciae (strain Bp) protein is UDP-N-acetylglucosamine--N-acetylmuramyl-(pentapeptide) pyrophosphoryl-undecaprenol N-acetylglucosamine transferase.